Consider the following 570-residue polypeptide: Urease subunit alpha (570 aa).

A Urease domain is found at Gly-131 to Phe-570. His-136, His-138, and Lys-219 together coordinate Ni(2+). Lys-219 carries the post-translational modification N6-carboxylysine. Residue His-221 participates in substrate binding. Residues His-248 and His-274 each contribute to the Ni(2+) site. Residue His-322 is the Proton donor of the active site. Residue Asp-362 coordinates Ni(2+).

The protein belongs to the metallo-dependent hydrolases superfamily. Urease alpha subunit family. As to quaternary structure, heterotrimer of UreA (gamma), UreB (beta) and UreC (alpha) subunits. Three heterotrimers associate to form the active enzyme. Requires Ni cation as cofactor. Carboxylation allows a single lysine to coordinate two nickel ions.

It localises to the cytoplasm. The catalysed reaction is urea + 2 H2O + H(+) = hydrogencarbonate + 2 NH4(+). It functions in the pathway nitrogen metabolism; urea degradation; CO(2) and NH(3) from urea (urease route): step 1/1. The protein is Urease subunit alpha of Rhizobium meliloti (strain 1021) (Ensifer meliloti).